The chain runs to 490 residues: Transcription factor lin-26 (490 aa).

3 disordered regions span residues Lys96 to Gln176, Thr236 to Ser262, and Ala302 to Arg326. The PEST stretch occupies residues Ser101–Thr110. The segment covering Ser101 to Pro120 has biased composition (low complexity). 2 stretches are compositionally biased toward polar residues: residues Ala123–Thr132 and Asn151–Gln176. Positions Thr236–Pro260 are enriched in basic and acidic residues. The C2H2-type; degenerate zinc finger occupies Tyr353 to His381.

Expressed in somatic gonads and germline precursors until the 50-cell stage. After the 100-cell stage, expression is seen in differentiating hypodermal and support cells (at protein level).

It is found in the nucleus. Probable transcription factor. Required to specify the fates of hypodermal and neuron-associated support cells. Functions during vulval development, playing a role in vulval precursor cell fate specification. Positively modulates expression of homeobox protein lin-39, perhaps by binding to regulatory regions of the lin-39 gene, acting in the vulval lineage. The chain is Transcription factor lin-26 from Caenorhabditis elegans.